A 337-amino-acid chain; its full sequence is Heme A synthase (337 aa).

5 consecutive transmembrane segments (helical) span residues 6–26 (ITKW…IGGI), 87–107 (FIHR…LIYF), 119–139 (LPYI…WYMV), 154–174 (LAFH…QLIK), and 192–212 (LIFS…GALV). Residue histidine 256 participates in heme binding. Helical transmembrane passes span 258-278 (LGSY…LTIE), 285-305 (IAYF…ITLL), and 308-328 (VPII…SIII). Histidine 316 contributes to the heme binding site.

It belongs to the COX15/CtaA family. Type 2 subfamily. As to quaternary structure, interacts with CtaB. Heme b serves as cofactor.

It is found in the cell membrane. It carries out the reaction Fe(II)-heme o + 2 A + H2O = Fe(II)-heme a + 2 AH2. It functions in the pathway porphyrin-containing compound metabolism; heme A biosynthesis; heme A from heme O: step 1/1. Its function is as follows. Catalyzes the conversion of heme O to heme A by two successive hydroxylations of the methyl group at C8. The first hydroxylation forms heme I, the second hydroxylation results in an unstable dihydroxymethyl group, which spontaneously dehydrates, resulting in the formyl group of heme A. This is Heme A synthase from Rickettsia akari (strain Hartford).